An 80-amino-acid polypeptide reads, in one-letter code: DinI-like protein Z2083/ECs2153 (80 aa).

In Escherichia coli O157:H7, this protein is DinI-like protein Z2083/ECs2153.